A 177-amino-acid polypeptide reads, in one-letter code: MFNIKMTISTLLIALIILVIIILVVFLYYKKQQPPKKVCKVDKDCGSGEHCVRGTCSTLSCLDAVKMDKRNIKIDSKISSCEFTPNFYRFTDTAADEQQEFGKTRHPIKITPSPSESHSPQEVCEKYCSWGTDDCTGWEYVGDEKEGTCYVYNNPHHPVLKYGKDHIIALPRNHKHA.

Over Met1–Thr7 the chain is Intravirion. Residues Ile8–Tyr28 traverse the membrane as a helical segment. The Virion surface portion of the chain corresponds to Tyr29–Ala177.

Belongs to the asfivirus inner membrane protein p22 family.

The protein localises to the virion membrane. The protein resides in the host cell membrane. The protein is Inner membrane protein p22 of Ornithodoros (relapsing fever ticks).